The following is a 282-amino-acid chain: Snake venom serine protease BmSP (282 aa).

A signal peptide spans Met-1–Ser-18. The propeptide occupies Lys-19 to Leu-56. Residues Asn-41 and Asn-45 are each glycosylated (N-linked (GlcNAc...) asparagine). Residues Ile-57–Ala-280 enclose the Peptidase S1 domain. Disulfide bonds link Cys-63/Cys-195, Cys-82/Cys-98, Cys-174/Cys-241, Cys-206/Cys-220, and Cys-231/Cys-256. His-97 acts as the Charge relay system in catalysis. Asn-135 carries N-linked (GlcNAc...) asparagine glycosylation. Asp-142 serves as the catalytic Charge relay system. Residues Asn-149 and Asn-153 are each glycosylated (N-linked (GlcNAc...) asparagine). The active-site Charge relay system is the Ser-235.

Belongs to the peptidase S1 family. Snake venom subfamily. As to quaternary structure, monomer. In terms of tissue distribution, expressed by the venom gland.

The protein localises to the secreted. In terms of biological role, snake venom serine protease that may act in the hemostasis system of the prey. The protein is Snake venom serine protease BmSP of Bungarus multicinctus (Many-banded krait).